The sequence spans 374 residues: Transcription factor NF-E2 45 kDa subunit (374 aa).

Disordered stretches follow at residues 1 to 21 (MSPC…IPEP) and 40 to 61 (LNAP…GPPP). A required for interaction with MAPK8 region spans residues 1–83 (MSPCPPQQSR…PGFPLPAPPY (83 aa)). A transactivation domain region spans residues 1–207 (MSPCPPQQSR…PPAETPLALE (207 aa)). Residues 48-61 (FEPPAPVPYPGPPP) are compositionally biased toward pro residues. Short sequence motifs (PXY motif) lie at residues 61–65 (PPPSY) and 79–83 (PAPPY). The disordered stretch occupies residues 132–165 (LSAGPSKPQEDPESDSGLSLNYSDAESLELEGTE). Position 158 is a phosphoserine; by MAPK8 (Ser-158). Ser-171 is modified (phosphoserine; by PKA). The interval 207–227 (EPSSGPVRAKPTARGEAGSRD) is disordered. The bZIP domain maps to 267-330 (LVRDIRRRGK…EVMRQQLTDL (64 aa)). The interval 269 to 288 (RDIRRRGKNKVAAQNCRKRK) is basic motif. The tract at residues 292 to 299 (IVQLEREL) is leucine-zipper. A Glycyl lysine isopeptide (Lys-Gly) (interchain with G-Cter in SUMO); alternate cross-link involves residue Lys-369. A Glycyl lysine isopeptide (Lys-Gly) (interchain with G-Cter in SUMO1); alternate cross-link involves residue Lys-369.

Belongs to the bZIP family. CNC subfamily. Homodimer; can bind DNA as a homodimer. Erythroid transcription activator nuclear factor erythroid-derived 2 (NF-E2), composed of a heterodimer of NFE2 and MAFK, possesses transactivation activity on beta-globin. Also forms high affinity heterodimer with MAFG; the interaction promotes erythropoiesis. Interacts (via the PXY motif 1) with ITCH (via the WW 1 domain); the interaction promotes 'Lys63'-linked ubiquitination of NFE2, translocates it to the cytoplasm and inhibits its transactivation activity. Interacts with KMT2D/MLL2; the interaction promotes transactivation of the beta-globin locus. Interacts with MAPK8 (phosphorylated form); the interaction leads to phosphorylation of NFE2 in undifferentiated cells. Phosphorylated on serine residues. In undifferentiated erythrocytes, phosphorylated by MAPK8 which then leads to ubiquitination and protein degradation. In terms of processing, sumoylated. Sumoylation is required for translocation to nuclear bodies PODs, anchoring to the gene loci, and transactivation of the beta-globin gene. Post-translationally, ubiquitinated mainly by 'Lys63'-linked ubiquitin. Polyubiquitination with 'Lys63'-linked ubiquitin by ITCH retains NFE2 in the cytoplasm preventing its transactivation activity. In undifferentiated erythrocyte, is ubiquitinated after MAPK8-mediatd phosphorylation leading to protein degradation.

The protein localises to the nucleus. It localises to the cytoplasm. Component of the NF-E2 complex essential for regulating erythroid and megakaryocytic maturation and differentiation. Binds to the hypersensitive site 2 (HS2) of the beta-globin control region (LCR). This subunit (NFE2) recognizes the TCAT/C sequence of the AP-1-like core palindrome present in a number of erythroid and megakaryocytic gene promoters. Requires MAFK or other small MAF proteins for binding to the NF-E2 motif. May play a role in all aspects of hemoglobin production from globin and heme synthesis to procurement of iron. The protein is Transcription factor NF-E2 45 kDa subunit (NFE2) of Bos taurus (Bovine).